Reading from the N-terminus, the 59-residue chain is Conotoxin mr5a (59 aa).

The first 22 residues, 1–22, serve as a signal peptide directing secretion; it reads MRCLPVFVILLLLIASAPSVDA. A propeptide spanning residues 23–48 is cleaved from the precursor; that stretch reads RPKTKDDMPLASFHDNAKRILQILQD.

Contains 2 disulfide bonds that can be either 'C1-C3, C2-C4' or 'C1-C4, C2-C3', since these disulfide connectivities have been observed for conotoxins with cysteine framework V (for examples, see AC P0DQQ7 and AC P81755). In terms of tissue distribution, expressed by the venom duct.

The protein resides in the secreted. The chain is Conotoxin mr5a from Conus marmoreus (Marble cone).